The sequence spans 396 residues: Enoyl-[acyl-carrier-protein] reductase [NADH] (396 aa).

NAD(+) contacts are provided by residues 47–52 (GASTGF), 73–74 (FE), 110–111 (DA), and 138–139 (LA). Y224 provides a ligand contact to substrate. Y234 serves as the catalytic Proton donor. Residues K243 and 272 to 274 (LVT) contribute to the NAD(+) site.

It belongs to the TER reductase family. Monomer.

The catalysed reaction is a 2,3-saturated acyl-[ACP] + NAD(+) = a (2E)-enoyl-[ACP] + NADH + H(+). The protein operates within lipid metabolism; fatty acid biosynthesis. Its function is as follows. Involved in the final reduction of the elongation cycle of fatty acid synthesis (FAS II). Catalyzes the reduction of a carbon-carbon double bond in an enoyl moiety that is covalently linked to an acyl carrier protein (ACP). This chain is Enoyl-[acyl-carrier-protein] reductase [NADH], found in Flavobacterium johnsoniae (strain ATCC 17061 / DSM 2064 / JCM 8514 / BCRC 14874 / CCUG 350202 / NBRC 14942 / NCIMB 11054 / UW101) (Cytophaga johnsonae).